The sequence spans 404 residues: Cysteine desulfurase IscS (404 aa).

Pyridoxal 5'-phosphate is bound by residues 75–76 (AT), Asn-155, Gln-183, and 203–205 (SAH). Lys-206 carries the N6-(pyridoxal phosphate)lysine modification. Pyridoxal 5'-phosphate is bound at residue Thr-243. Catalysis depends on Cys-328, which acts as the Cysteine persulfide intermediate. Cys-328 provides a ligand contact to [2Fe-2S] cluster.

Belongs to the class-V pyridoxal-phosphate-dependent aminotransferase family. NifS/IscS subfamily. As to quaternary structure, homodimer. Forms a heterotetramer with IscU, interacts with other sulfur acceptors. The cofactor is pyridoxal 5'-phosphate.

It is found in the cytoplasm. It catalyses the reaction (sulfur carrier)-H + L-cysteine = (sulfur carrier)-SH + L-alanine. The protein operates within cofactor biosynthesis; iron-sulfur cluster biosynthesis. Master enzyme that delivers sulfur to a number of partners involved in Fe-S cluster assembly, tRNA modification or cofactor biosynthesis. Catalyzes the removal of elemental sulfur atoms from cysteine to produce alanine. Functions as a sulfur delivery protein for Fe-S cluster synthesis onto IscU, an Fe-S scaffold assembly protein, as well as other S acceptor proteins. This chain is Cysteine desulfurase IscS, found in Buchnera aphidicola subsp. Schizaphis graminum (strain Sg).